The primary structure comprises 131 residues: D-ribose pyranase (131 aa).

Histidine 20 (proton donor) is an active-site residue. Residues aspartate 28, histidine 98, and 120 to 122 contribute to the substrate site; that span reads YSN.

This sequence belongs to the RbsD / FucU family. RbsD subfamily. Homodecamer.

The protein localises to the cytoplasm. The enzyme catalyses beta-D-ribopyranose = beta-D-ribofuranose. It participates in carbohydrate metabolism; D-ribose degradation; D-ribose 5-phosphate from beta-D-ribopyranose: step 1/2. In terms of biological role, catalyzes the interconversion of beta-pyran and beta-furan forms of D-ribose. The sequence is that of D-ribose pyranase from Lactobacillus johnsonii (strain CNCM I-12250 / La1 / NCC 533).